The primary structure comprises 279 residues: Probable endonuclease 4 (279 aa).

Zn(2+) is bound by residues histidine 68, histidine 108, glutamate 143, aspartate 177, histidine 180, histidine 214, aspartate 227, histidine 229, and glutamate 259.

Belongs to the AP endonuclease 2 family. Requires Zn(2+) as cofactor.

The catalysed reaction is Endonucleolytic cleavage to 5'-phosphooligonucleotide end-products.. Its function is as follows. Endonuclease IV plays a role in DNA repair. It cleaves phosphodiester bonds at apurinic or apyrimidinic (AP) sites, generating a 3'-hydroxyl group and a 5'-terminal sugar phosphate. The chain is Probable endonuclease 4 from Nitrosopumilus maritimus (strain SCM1).